A 467-amino-acid chain; its full sequence is MRLPREIGPIHFVGIGGIGMSGIAEVLVNLGYAVQGSDASDNYNLDRLRKKGAKVSVGHKAENVDGAEVVVVSTAIKRDNPELMAARERRIPVVRRAEMLAELMRLKSCVAIAGTHGKTTTTTMVATLLDAGGLDPTVINGGIINAYGSNARLGAGDWMVVEADESDGTFLKLPTDVAIVTNVDPEHLDHFKTFEAVQDAFRHFVENLPFYGFAVMCIDHPVVQSLVGKIEDRRIITYGENPQADVRLVDLTPMGGGSKFKVAFRDRKTGAVHEIPDLMLPMPGRHNASNATAAIAVARELGVSDEAIRSAIAGFGGVKRRFTKTGEWNGVTVIDDYGHHPVEIAAVLKAARESTNGKIVAVVQPHRYTRLQSLFEEFCTCFNDADAVIVADVYAAGEAPIDGIDRDHFVAGLRAHGHREVVPLPAAPELAGIVKGLAKSGDLVVCLGAGNITQWAYALPGELNALG.

114–120 (GTHGKTT) lines the ATP pocket.

The protein belongs to the MurCDEF family.

It localises to the cytoplasm. It catalyses the reaction UDP-N-acetyl-alpha-D-muramate + L-alanine + ATP = UDP-N-acetyl-alpha-D-muramoyl-L-alanine + ADP + phosphate + H(+). It functions in the pathway cell wall biogenesis; peptidoglycan biosynthesis. Cell wall formation. In Bradyrhizobium diazoefficiens (strain JCM 10833 / BCRC 13528 / IAM 13628 / NBRC 14792 / USDA 110), this protein is UDP-N-acetylmuramate--L-alanine ligase.